Reading from the N-terminus, the 213-residue chain is Peptide methionine sulfoxide reductase MsrA (213 aa).

Cysteine 53 is a catalytic residue.

Belongs to the MsrA Met sulfoxide reductase family.

The enzyme catalyses L-methionyl-[protein] + [thioredoxin]-disulfide + H2O = L-methionyl-(S)-S-oxide-[protein] + [thioredoxin]-dithiol. The catalysed reaction is [thioredoxin]-disulfide + L-methionine + H2O = L-methionine (S)-S-oxide + [thioredoxin]-dithiol. Has an important function as a repair enzyme for proteins that have been inactivated by oxidation. Catalyzes the reversible oxidation-reduction of methionine sulfoxide in proteins to methionine. The chain is Peptide methionine sulfoxide reductase MsrA from Serratia proteamaculans (strain 568).